The following is a 118-amino-acid chain: Large ribosomal subunit protein uL18 (118 aa).

Residues 1–24 (MITKPDKNKIRQKRHRRVRGKLSG) are disordered. The segment covering 10 to 20 (IRQKRHRRVRG) has biased composition (basic residues).

This sequence belongs to the universal ribosomal protein uL18 family. In terms of assembly, part of the 50S ribosomal subunit; part of the 5S rRNA/L5/L18/L25 subcomplex. Contacts the 5S and 23S rRNAs.

In terms of biological role, this is one of the proteins that bind and probably mediate the attachment of the 5S RNA into the large ribosomal subunit, where it forms part of the central protuberance. The chain is Large ribosomal subunit protein uL18 from Streptococcus sanguinis (strain SK36).